The following is a 365-amino-acid chain: Phospho-N-acetylmuramoyl-pentapeptide-transferase (365 aa).

The next 10 helical transmembrane spans lie at 22 to 42, 74 to 94, 95 to 115, 134 to 154, 169 to 189, 201 to 221, 240 to 260, 268 to 288, 292 to 312, and 342 to 362; these read YVSV…LFLG, TMGG…WGSL, SSIY…IGFF, KFAL…YLLS, LHIP…INGS, GLAI…AYIQ, LAEV…FLWF, FMGD…AVMI, LIFF…MLQV, and KVVI…LVAI.

This sequence belongs to the glycosyltransferase 4 family. MraY subfamily. Mg(2+) serves as cofactor.

It is found in the cell inner membrane. It catalyses the reaction UDP-N-acetyl-alpha-D-muramoyl-L-alanyl-gamma-D-glutamyl-meso-2,6-diaminopimeloyl-D-alanyl-D-alanine + di-trans,octa-cis-undecaprenyl phosphate = di-trans,octa-cis-undecaprenyl diphospho-N-acetyl-alpha-D-muramoyl-L-alanyl-D-glutamyl-meso-2,6-diaminopimeloyl-D-alanyl-D-alanine + UMP. Its pathway is cell wall biogenesis; peptidoglycan biosynthesis. Functionally, catalyzes the initial step of the lipid cycle reactions in the biosynthesis of the cell wall peptidoglycan: transfers peptidoglycan precursor phospho-MurNAc-pentapeptide from UDP-MurNAc-pentapeptide onto the lipid carrier undecaprenyl phosphate, yielding undecaprenyl-pyrophosphoryl-MurNAc-pentapeptide, known as lipid I. This Francisella philomiragia subsp. philomiragia (strain ATCC 25017 / CCUG 19701 / FSC 153 / O#319-036) protein is Phospho-N-acetylmuramoyl-pentapeptide-transferase.